Consider the following 421-residue polypeptide: MDIIDIKTYMHSIGREARAASRLIAKAETAAKNRALTQMAVAIKRDEQQLLAANARDVENAKERGLEAAMIDRLTLTPKSVASMAEGLLQIAALADPVGEISDLNYRPSGIQVGKMRVPLGVIGIIYEARPNVTADAAGLCLKAGNAAILRGGSEAIYSNQAIAACVREGLKTAGLPETAIQVIETTDRAAVGELVTMKEFVDVIVPRGGKGLIERISNEARIPVIKHLDGVCHIYIDEEADQEKAIRVADNAKTQRYGTCNTLETLLVHENIAGEVLPPLCRIYLDKGVELRGDPASQAIIPEMKEAREEDWYTEYLAPVLSVRVVSSLDQAIEHITIYGSQHTDSIITENYSNARRFLREVDSSSVMVNASTRFADGFEYGLGAEIGISTDKLHARGPVGLEGLTSQKFIVLGDGHIRQ.

Belongs to the gamma-glutamyl phosphate reductase family.

The protein resides in the cytoplasm. It carries out the reaction L-glutamate 5-semialdehyde + phosphate + NADP(+) = L-glutamyl 5-phosphate + NADPH + H(+). It participates in amino-acid biosynthesis; L-proline biosynthesis; L-glutamate 5-semialdehyde from L-glutamate: step 2/2. In terms of biological role, catalyzes the NADPH-dependent reduction of L-glutamate 5-phosphate into L-glutamate 5-semialdehyde and phosphate. The product spontaneously undergoes cyclization to form 1-pyrroline-5-carboxylate. The polypeptide is Gamma-glutamyl phosphate reductase (Nitrosospira multiformis (strain ATCC 25196 / NCIMB 11849 / C 71)).